We begin with the raw amino-acid sequence, 361 residues long: Peptide chain release factor 1 (361 aa).

An N5-methylglutamine modification is found at glutamine 236.

This sequence belongs to the prokaryotic/mitochondrial release factor family. Post-translationally, methylated by PrmC. Methylation increases the termination efficiency of RF1.

Its subcellular location is the cytoplasm. Functionally, peptide chain release factor 1 directs the termination of translation in response to the peptide chain termination codons UAG and UAA. This Lactobacillus delbrueckii subsp. bulgaricus (strain ATCC 11842 / DSM 20081 / BCRC 10696 / JCM 1002 / NBRC 13953 / NCIMB 11778 / NCTC 12712 / WDCM 00102 / Lb 14) protein is Peptide chain release factor 1.